The following is a 127-amino-acid chain: Sulfiredoxin (127 aa).

Belongs to the sulfiredoxin family. It depends on Mg(2+) as a cofactor. Post-translationally, forms a transient disulfide bond with TSA1 during the reduction of cysteine sulfinic acid (-SO2H).

Its subcellular location is the cytoplasm. The protein localises to the nucleus. It catalyses the reaction S-hydroxy-S-oxy-L-cysteinyl-[peroxiredoxin] + [protein]-dithiol + ATP = S-hydroxy-L-cysteinyl-[peroxiredoxin] + [protein]-disulfide + ADP + phosphate. Functionally, contributes to oxidative stress resistance by reducing cysteine-sulfinic acid formed under exposure to oxidants in the peroxiredoxin TSA1. May catalyze the reduction in a multi-step process by acting both as a specific phosphotransferase and as thioltransferase. The chain is Sulfiredoxin from Saccharomyces cerevisiae (strain ATCC 204508 / S288c) (Baker's yeast).